Here is a 339-residue protein sequence, read N- to C-terminus: Anthranilate phosphoribosyltransferase (339 aa).

5-phospho-alpha-D-ribose 1-diphosphate is bound by residues glycine 79, 82–83 (GD), serine 87, 89–92 (NIST), 107–115 (KHGNRSISS), and serine 119. Glycine 79 is a binding site for anthranilate. Serine 91 is a binding site for Mg(2+). Residue asparagine 110 coordinates anthranilate. An anthranilate-binding site is contributed by arginine 165. Residues aspartate 224 and glutamate 225 each coordinate Mg(2+).

It belongs to the anthranilate phosphoribosyltransferase family. Homodimer. Mg(2+) serves as cofactor.

It catalyses the reaction N-(5-phospho-beta-D-ribosyl)anthranilate + diphosphate = 5-phospho-alpha-D-ribose 1-diphosphate + anthranilate. It participates in amino-acid biosynthesis; L-tryptophan biosynthesis; L-tryptophan from chorismate: step 2/5. Catalyzes the transfer of the phosphoribosyl group of 5-phosphorylribose-1-pyrophosphate (PRPP) to anthranilate to yield N-(5'-phosphoribosyl)-anthranilate (PRA). The chain is Anthranilate phosphoribosyltransferase from Listeria monocytogenes serovar 1/2a (strain ATCC BAA-679 / EGD-e).